A 521-amino-acid chain; its full sequence is T-box transcription factor TBX5 (521 aa).

The interval 1-45 (MADTEEGFGLPSTPVDSEAKELQAEAKQDPQLGTTSKAPTSPQAA) is disordered. Positions 17 to 28 (SEAKELQAEAKQ) are enriched in basic and acidic residues. A compositionally biased stretch (polar residues) spans 31–45 (QLGTTSKAPTSPQAA). The T-box DNA-binding region spans 63 to 238 (LWLKFHEVGT…NNPFAKGFRG (176 aa)). Disordered stretches follow at residues 254–281 (EYPV…TRVL) and 332–352 (STTE…EEDP). Residues 262-281 (TVRQKVSSNHSPFSGETRVL) are compositionally biased toward polar residues.

In terms of assembly, monomer. Homodimer (via the T-box); binds DNA as homodimer.

The protein resides in the nucleus. The protein localises to the cytoplasm. In terms of biological role, DNA-binding protein that regulates the transcription of several genes and is involved in heart development and limb pattern formation. May bind to the core DNA motif of promoters. This Gallus gallus (Chicken) protein is T-box transcription factor TBX5 (TBX5).